The chain runs to 771 residues: GPI mannosyltransferase 3 (771 aa).

Positions 1-47 are disordered; that stretch reads MSSSRRRKSFTSSSSSSSPSFHSPPPTSRLRPRSPPSSNTKTSPTST. Low complexity-rich tracts occupy residues 10–21 and 36–47; these read FTSSSSSSSPSF and PSSNTKTSPTST. Helical transmembrane passes span 49–69, 251–271, 285–305, 341–361, 378–398, 410–430, and 441–461; these read PLAT…AFTV, LSLA…WMGL, AILV…SCVV, YVSQ…LVGL, SLVQ…LSLV, LPSL…PAVI, and LTLI…TIYH. Residues 575 to 594 are disordered; the sequence is SYLSAQPRPQHPSTTSTNDA.

The protein belongs to the glycosyltransferase 22 family. PIGB subfamily.

It localises to the endoplasmic reticulum membrane. It functions in the pathway glycolipid biosynthesis; glycosylphosphatidylinositol-anchor biosynthesis. Functionally, mannosyltransferase involved in glycosylphosphatidylinositol-anchor biosynthesis. Transfers the third mannose to Man2-GlcN-acyl-PI during GPI precursor assembly. In Aspergillus fumigatus (strain ATCC MYA-4609 / CBS 101355 / FGSC A1100 / Af293) (Neosartorya fumigata), this protein is GPI mannosyltransferase 3 (gpi10).